We begin with the raw amino-acid sequence, 71 residues long: Putative RNA-binding regulatory peptide (71 aa).

As to quaternary structure, interacts with IGF2BP1 (via KH3 and KH4 domains); the interaction results in increased binding of IGF2BP1 to N6-methyladenosine (m6A)-containing mRNAs. Detected in colon (at protein level).

Its function is as follows. Enhances binding of IGF2BP1 to N6-methyladenosine (m6A)-containing mRNAs, thereby contributing to increased mRNA stability. Also increases the interaction of IGF2BP1 with RNA stabilizers ELAVL1/HUR, MATR3 and PABPC1, and increases the interaction of RNA stabilizers ELAVL1/HUR, MATR3 and PABPC1 with m6A-containing mRNAs. Contributes to MYC stability by enhancing binding of IGF2BP1 to m6A-containing MYC mRNAs and increasing recruitment of RNA stabilizing proteins to m6A-containing MYC mRNAs. The protein is Putative RNA-binding regulatory peptide of Homo sapiens (Human).